A 227-amino-acid polypeptide reads, in one-letter code: tRNA (guanine-N(1)-)-methyltransferase (227 aa).

S-adenosyl-L-methionine contacts are provided by residues Gly-110 and 129–134 (IGDYVL).

The protein belongs to the RNA methyltransferase TrmD family. As to quaternary structure, homodimer.

It localises to the cytoplasm. It carries out the reaction guanosine(37) in tRNA + S-adenosyl-L-methionine = N(1)-methylguanosine(37) in tRNA + S-adenosyl-L-homocysteine + H(+). In terms of biological role, specifically methylates guanosine-37 in various tRNAs. This is tRNA (guanine-N(1)-)-methyltransferase from Mycoplasmopsis synoviae (strain 53) (Mycoplasma synoviae).